Reading from the N-terminus, the 132-residue chain is Small ribosomal subunit protein uS8 (132 aa).

It belongs to the universal ribosomal protein uS8 family. In terms of assembly, part of the 30S ribosomal subunit. Contacts proteins S5 and S12.

In terms of biological role, one of the primary rRNA binding proteins, it binds directly to 16S rRNA central domain where it helps coordinate assembly of the platform of the 30S subunit. This chain is Small ribosomal subunit protein uS8, found in Limosilactobacillus fermentum (strain NBRC 3956 / LMG 18251) (Lactobacillus fermentum).